A 308-amino-acid polypeptide reads, in one-letter code: MAPMVISDKDEMRKWSRSMRSQGKLIALVPTMGFLHEGHLSLVRDAHNHADLVAVSIYVNPGQFSPTEDLSAYPSDFQGDLQKLMSVPGGVDVVFHPHNLYDYGGDGGDAVAECGGDGVVSCVDRRSGFGHETWVRAEKLEKPLCGKSRPVFFRGVATIVTKLFNIVEPDVAVFGKKDYQQWKIIQRMVRDLDFSIKVIGSEVIREKDGLAMSSRNVYLSPEEREKAVSINKSLFRAKSAAEDGQIHCEKLINLVVQSITEAGGRIDYAEIVDQNNLEKVEWIKGPVVFCVSAWFGKARLIDNIEINL.

Residue Ala2 is a propeptide, removed; partial.

The protein belongs to the pantothenate synthetase family. As to quaternary structure, homodimer. Expressed at low levels in leaf and root.

The protein localises to the cytoplasm. It catalyses the reaction (R)-pantoate + beta-alanine + ATP = (R)-pantothenate + AMP + diphosphate + H(+). It functions in the pathway cofactor biosynthesis; (R)-pantothenate biosynthesis; (R)-pantothenate from (R)-pantoate and beta-alanine: step 1/1. In Lotus japonicus (Lotus corniculatus var. japonicus), this protein is Pantoate--beta-alanine ligase (PANC).